Here is a 312-residue protein sequence, read N- to C-terminus: tRNA dimethylallyltransferase (312 aa).

19–26 (GPSGSGKS) contacts ATP. 21-26 (SGSGKS) is a substrate binding site. The tract at residues 44–47 (DSLS) is interaction with substrate tRNA.

It belongs to the IPP transferase family. As to quaternary structure, monomer. The cofactor is Mg(2+).

It carries out the reaction adenosine(37) in tRNA + dimethylallyl diphosphate = N(6)-dimethylallyladenosine(37) in tRNA + diphosphate. Catalyzes the transfer of a dimethylallyl group onto the adenine at position 37 in tRNAs that read codons beginning with uridine, leading to the formation of N6-(dimethylallyl)adenosine (i(6)A). In Helicobacter pylori (strain J99 / ATCC 700824) (Campylobacter pylori J99), this protein is tRNA dimethylallyltransferase.